The following is a 235-amino-acid chain: Protein MAINTENANCE OF PSII UNDER HIGH LIGHT 1 (235 aa).

A helical membrane pass occupies residues 127–147; it reads TAAIVAGIALIAVAAASSILL. The disordered stretch occupies residues 181-235; it reads QPSTPSVTEAPPVAELETSLPETPSVAQQETSLPETMASEAQPEASSVPTTSSTS. 2 stretches are compositionally biased toward polar residues: residues 200-214 and 224-235; these read LPETPSVAQQETSLP and EASSVPTTSSTS.

Interacts with psbA, psbB, psbC and psbD.

The protein resides in the plastid. It localises to the chloroplast thylakoid membrane. Functionally, interacts with photosystem II (PSII) core complexes and participates in the maintenance of normal PSII activity under photoinhibitory stress. May protect against photodamage or stabilize PSII under high-light stress. Participates in the maintainance of proper PSII function under high-light stress by protecting PSII from photooxidative damage. This is Protein MAINTENANCE OF PSII UNDER HIGH LIGHT 1 from Arabidopsis thaliana (Mouse-ear cress).